The following is a 114-amino-acid chain: Small ribosomal subunit protein eS25 (114 aa).

The tract at residues 1-33 (MAPKKDKAPPPSSKPAKSGGKQKKKKWSKGKQK) is disordered. Residues 20–30 (GKQKKKKWSKG) are compositionally biased toward basic residues.

The protein belongs to the eukaryotic ribosomal protein eS25 family.

This is Small ribosomal subunit protein eS25 (RPS25) from Amaranthus cruentus (Purple amaranth).